We begin with the raw amino-acid sequence, 507 residues long: Glutamyl-tRNA(Gln) amidotransferase subunit A, mitochondrial (507 aa).

Active-site charge relay system residues include K79 and S160. S184 acts as the Acyl-ester intermediate in catalysis.

This sequence belongs to the amidase family. GatA subfamily. In terms of assembly, subunit of the heterotrimeric GatCAB amidotransferase (AdT) complex, composed of A, B and C subunits.

Its subcellular location is the mitochondrion. The catalysed reaction is L-glutamyl-tRNA(Gln) + L-glutamine + ATP + H2O = L-glutaminyl-tRNA(Gln) + L-glutamate + ADP + phosphate + H(+). Allows the formation of correctly charged Gln-tRNA(Gln) through the transamidation of misacylated Glu-tRNA(Gln) in the mitochondria. The reaction takes place in the presence of glutamine and ATP through an activated gamma-phospho-Glu-tRNA(Gln). The polypeptide is Glutamyl-tRNA(Gln) amidotransferase subunit A, mitochondrial (Drosophila pseudoobscura pseudoobscura (Fruit fly)).